Here is a 267-residue protein sequence, read N- to C-terminus: tRNA pseudouridine synthase A (267 aa).

The Nucleophile role is filled by Asp55. Residue Tyr111 coordinates substrate.

Belongs to the tRNA pseudouridine synthase TruA family.

It catalyses the reaction uridine(38/39/40) in tRNA = pseudouridine(38/39/40) in tRNA. Functionally, formation of pseudouridine at positions 38, 39 and 40 in the anticodon stem and loop of transfer RNAs. This is tRNA pseudouridine synthase A from Thermococcus onnurineus (strain NA1).